Reading from the N-terminus, the 190-residue chain is UPF0301 protein PSPPH_0476 (190 aa).

It belongs to the UPF0301 (AlgH) family.

The protein is UPF0301 protein PSPPH_0476 of Pseudomonas savastanoi pv. phaseolicola (strain 1448A / Race 6) (Pseudomonas syringae pv. phaseolicola (strain 1448A / Race 6)).